Reading from the N-terminus, the 525-residue chain is Lysine--tRNA ligase (525 aa).

E419 and E426 together coordinate Mg(2+).

Belongs to the class-II aminoacyl-tRNA synthetase family. As to quaternary structure, homodimer. Mg(2+) is required as a cofactor.

The protein localises to the cytoplasm. The enzyme catalyses tRNA(Lys) + L-lysine + ATP = L-lysyl-tRNA(Lys) + AMP + diphosphate. The sequence is that of Lysine--tRNA ligase (lysS) from Deinococcus radiodurans (strain ATCC 13939 / DSM 20539 / JCM 16871 / CCUG 27074 / LMG 4051 / NBRC 15346 / NCIMB 9279 / VKM B-1422 / R1).